The sequence spans 89 residues: Small ribosomal subunit protein uS15 (89 aa).

It belongs to the universal ribosomal protein uS15 family. As to quaternary structure, part of the 30S ribosomal subunit. Forms a bridge to the 50S subunit in the 70S ribosome, contacting the 23S rRNA.

Its function is as follows. One of the primary rRNA binding proteins, it binds directly to 16S rRNA where it helps nucleate assembly of the platform of the 30S subunit by binding and bridging several RNA helices of the 16S rRNA. In terms of biological role, forms an intersubunit bridge (bridge B4) with the 23S rRNA of the 50S subunit in the ribosome. This chain is Small ribosomal subunit protein uS15, found in Lactobacillus helveticus (strain DPC 4571).